Consider the following 285-residue polypeptide: tRNA-cytidine(32) 2-sulfurtransferase (285 aa).

The PP-loop motif motif lies at 48–53 (SGGKDS). The [4Fe-4S] cluster site is built by C122, C125, and C213.

It belongs to the TtcA family. As to quaternary structure, homodimer. Requires Mg(2+) as cofactor. [4Fe-4S] cluster is required as a cofactor.

It localises to the cytoplasm. The enzyme catalyses cytidine(32) in tRNA + S-sulfanyl-L-cysteinyl-[cysteine desulfurase] + AH2 + ATP = 2-thiocytidine(32) in tRNA + L-cysteinyl-[cysteine desulfurase] + A + AMP + diphosphate + H(+). It functions in the pathway tRNA modification. Functionally, catalyzes the ATP-dependent 2-thiolation of cytidine in position 32 of tRNA, to form 2-thiocytidine (s(2)C32). The sulfur atoms are provided by the cysteine/cysteine desulfurase (IscS) system. In Cytophaga hutchinsonii (strain ATCC 33406 / DSM 1761 / CIP 103989 / NBRC 15051 / NCIMB 9469 / D465), this protein is tRNA-cytidine(32) 2-sulfurtransferase.